The chain runs to 840 residues: MSGSEEEHLVSLTFRKNEEDMDEDEGKVKQKEKPKEKQMEFVNQNFVESTEDESEVSTPTAVGLPIGTSTPDGDETPTQPDPNGKYTMAQTKDADLSRPSGLPSNGNPGSSTTVPPASKSGPVAPPRPSGTPVAPQRNRRRKVTELKCSEVRWFFQEPKGTLWNPFNGRDSIMLEIKYRKEKGIELDEAMQEIYDESLTHYKMEMKDEPEIENGNIGMEQEKPMVVVMNGQYKVNKDNSKIDPIYWKDDSKEIRRGSWFSPDYQPLEMPLSDQIEKNHLQCFRNQMIPEGTTVFSKSETSNKPVLAELHVDGYDIRWSSVIDISLHQKGNAILRYLWAKSTPLRRGYEKEADWNDAAAEISHLILVVHGIGQKGYENLIAQNANQVRDGVVSAMEKVYPEEKSRPMFLPVEWRSALKLDNGLTDNITIPKMSSMRASLNSTAMDVMYYQSPLFRTEIVRGVVSQLNRTYKLFKANNPQFNGHVSVFGHSLGSVICYDVLTQYSPLMLFDKYVTKSIDEYLKRDDTNASEEARKALEAMKLAREQLRDNLEGGIHKLLVTKEEQLEFKVKYLFAVGSPLGVFLTMRGGESTDLLSKATNVERVFNIFHPYDPVAYRLEPFFAPEYRHIRPIKLFSNTDLRARASYENLPLDVYKHYLKKLKNLNKAKKNKDDKTADARSGGDDENEDEDECDSDEDARSGCSSPRSMTPPPFETAAANAAAAAKETKAVKKGWFSFGTSSNPKKTQSTASLGSVNATSTENIEFAKEAAEELPLAEKILGSGVRVPHRIDFQLQPALTEKSYWSVLKSHFAYWTNADLALFLANVLYCKPLKPEEAKPTWA.

2 disordered regions span residues 1–142 (MSGS…RRRK) and 666–718 (KKNK…AANA). A compositionally biased stretch (basic and acidic residues) spans 26–39 (GKVKQKEKPKEKQM). Low complexity predominate over residues 97–111 (SRPSGLPSNGNPGSS). A DDHD domain is found at 564 to 827 (LEFKVKYLFA…ALFLANVLYC (264 aa)). A compositionally biased stretch (basic and acidic residues) spans 668 to 680 (NKDDKTADARSGG). Over residues 681–694 (DDENEDEDECDSDE) the composition is skewed to acidic residues.

Belongs to the PA-PLA1 family.

The enzyme catalyses 1,2-dihexadecanoyl-sn-glycero-3-phospho-(1D-myo-inositol) + H2O = 2-hexadecanoyl-sn-glycero-3-phospho-(1D-myo-inositol) + hexadecanoate + H(+). It catalyses the reaction a 1,2-diacyl-sn-glycero-3-phospho-L-serine + H2O = a 2-acyl-sn-glycero-3-phospho-L-serine + a fatty acid + H(+). It carries out the reaction 1-hexadecanoyl-2-(9Z-octadecenoyl)-sn-glycero-3-phospho-L-serine + H2O = 2-(9Z-octadecenoyl)-sn-glycero-3-phospho-L-serine + hexadecanoate + H(+). The catalysed reaction is 1,2-di-(9Z-octadecenoyl)-sn-glycero-3-phosphocholine + H2O = (9Z-octadecenoyl)-sn-glycero-3-phosphocholine + (9Z)-octadecenoate + H(+). The enzyme catalyses a 1,2-diacyl-sn-glycero-3-phosphocholine + H2O = a 1-acyl-sn-glycero-3-phosphocholine + a fatty acid + H(+). It catalyses the reaction 1,2-dihexadecanoyl-sn-glycero-3-phosphocholine + H2O = 1-hexadecanoyl-sn-glycero-3-phosphocholine + hexadecanoate + H(+). Inhibited by E-6-bromomethylene-3-1-naphthalenyl-2H-tetrahydropyran-2-one (BEL) in vitro. Functionally, hydrolyzes the ester bond at the sn-1 position of glycerophospholipids and produces 2-acyl lysophospholipids, being phosphatidylinositol (PI) its major substrate. PI is a versatile lipid that not only serves as a structural component of cellular membranes, but also plays important roles in signal transduction through distinct phosphorylated derivatives of the inositol head group. Catalyzes the hydrolysis of phosphatidylcholine at sn-2 position in vitro. Regulates asymmetric division, an important property of stem cells in C.elegans, by controlling the subcellular localizations of beta-catenin. This chain is Intracellular phospholipase A1, found in Caenorhabditis elegans.